Reading from the N-terminus, the 344-residue chain is Phosphoribosylformylglycinamidine cyclo-ligase (344 aa).

It belongs to the AIR synthase family.

The protein resides in the cytoplasm. It catalyses the reaction 2-formamido-N(1)-(5-O-phospho-beta-D-ribosyl)acetamidine + ATP = 5-amino-1-(5-phospho-beta-D-ribosyl)imidazole + ADP + phosphate + H(+). Its pathway is purine metabolism; IMP biosynthesis via de novo pathway; 5-amino-1-(5-phospho-D-ribosyl)imidazole from N(2)-formyl-N(1)-(5-phospho-D-ribosyl)glycinamide: step 2/2. The protein is Phosphoribosylformylglycinamidine cyclo-ligase of Exiguobacterium sp. (strain ATCC BAA-1283 / AT1b).